Here is a 554-residue protein sequence, read N- to C-terminus: Hydroxylamine reductase (554 aa).

[2Fe-2S] cluster contacts are provided by cysteine 3, cysteine 6, cysteine 18, and cysteine 25. Histidine 252, glutamate 276, cysteine 320, cysteine 408, cysteine 436, cysteine 461, glutamate 495, and lysine 497 together coordinate hybrid [4Fe-2O-2S] cluster. Cysteine 408 carries the post-translational modification Cysteine persulfide.

Belongs to the HCP family. It depends on [2Fe-2S] cluster as a cofactor. Hybrid [4Fe-2O-2S] cluster is required as a cofactor.

The protein localises to the cytoplasm. It carries out the reaction A + NH4(+) + H2O = hydroxylamine + AH2 + H(+). Functionally, catalyzes the reduction of hydroxylamine to form NH(3) and H(2)O. In Shewanella baltica (strain OS195), this protein is Hydroxylamine reductase.